The primary structure comprises 497 residues: Proline--tRNA ligase (497 aa).

The protein belongs to the class-II aminoacyl-tRNA synthetase family. ProS type 3 subfamily. As to quaternary structure, homodimer.

Its subcellular location is the cytoplasm. It catalyses the reaction tRNA(Pro) + L-proline + ATP = L-prolyl-tRNA(Pro) + AMP + diphosphate. Catalyzes the attachment of proline to tRNA(Pro) in a two-step reaction: proline is first activated by ATP to form Pro-AMP and then transferred to the acceptor end of tRNA(Pro). The chain is Proline--tRNA ligase from Deinococcus geothermalis (strain DSM 11300 / CIP 105573 / AG-3a).